A 507-amino-acid polypeptide reads, in one-letter code: Wax ester synthase/diacylglycerol acyltransferase 5 (507 aa).

Topologically, residues 1-211 are cytoplasmic; the sequence is MEIKIRRRRG…LKTSSRCYSR (211 aa). The active-site Proton acceptor is His-161. Residues 212–232 form a helical membrane-spanning segment; sequence FFWLVMVLWSAALLVLNTVCD. Residues 233-507 are Lumenal-facing; the sequence is ALEFIATALF…VVVQERTSTQ (275 aa). N-linked (GlcNAc...) asparagine glycans are attached at residues Asn-314 and Asn-421.

This sequence in the N-terminal section; belongs to the long-chain O-acyltransferase family. Mostly expressed in flowers and siliques.

The protein localises to the cell membrane. It localises to the endoplasmic reticulum membrane. The catalysed reaction is a long chain fatty alcohol + a fatty acyl-CoA = a wax ester + CoA. It carries out the reaction an acyl-CoA + a 1,2-diacyl-sn-glycerol = a triacyl-sn-glycerol + CoA. It functions in the pathway glycerolipid metabolism; triacylglycerol biosynthesis. It participates in lipid metabolism. Its function is as follows. Bifunctional wax ester synthase/diacylglycerol acyltransferase. Involved in cuticular wax biosynthesis. This is Wax ester synthase/diacylglycerol acyltransferase 5 from Arabidopsis thaliana (Mouse-ear cress).